Consider the following 193-residue polypeptide: MNFLAHLHLAHLAESSLSGNLLADFVRGNPEESFPPDVVAGIHMHRRIDVLTDNLPEVREAREWFRRETRRVAPITLDVMWDHFLSRHWSQLSPDFPLQEFICYARKQVMTILPDSPPRFINLNNYLWSEQWLVRYRDMDFIQNVLNGMASRRPRLDALRDSWYDLNAHYTALGTRFWQFYPRMMAQASHKAL.

Belongs to the AcpH family.

It carries out the reaction holo-[ACP] + H2O = apo-[ACP] + (R)-4'-phosphopantetheine + H(+). Its function is as follows. Converts holo-ACP to apo-ACP by hydrolytic cleavage of the phosphopantetheine prosthetic group from ACP. The polypeptide is Acyl carrier protein phosphodiesterase (Shigella boydii serotype 4 (strain Sb227)).